The primary structure comprises 458 residues: Acetyl-CoA decarbonylase/synthase complex subunit gamma (458 aa).

A 4Fe-4S domain is found at Met1–Pro59. Residues Cys17, Cys20, Cys25, and Cys42 each contribute to the [4Fe-4S] cluster site.

As to quaternary structure, heterodimer of delta and gamma chains. The ACDS complex is made up of alpha, epsilon, beta, gamma and delta chains with a probable stoichiometry of (alpha(2)epsilon(2))(4)-beta(8)-(gamma(1)delta(1))(8). Requires corrinoid as cofactor. [4Fe-4S] cluster serves as cofactor.

It carries out the reaction 5,6,7,8-tetrahydrosarcinapterin + methyl-Co(III)-[corrinoid Fe-S protein] = 5-methyltetrahydrosarcinapterin + Co(I)-[corrinoid Fe-S protein] + H(+). Part of a complex that catalyzes the reversible cleavage of acetyl-CoA, allowing autotrophic growth from CO(2). The protein is Acetyl-CoA decarbonylase/synthase complex subunit gamma of Methanothermobacter thermautotrophicus (strain ATCC 29096 / DSM 1053 / JCM 10044 / NBRC 100330 / Delta H) (Methanobacterium thermoautotrophicum).